We begin with the raw amino-acid sequence, 709 residues long: MEHTYQYSWIIPFVPLPIPIKIGMGLLLFPMATKNLRRMWAFPNILLLSIVMIFSVDLSIQQINRSSIYQYVWSWTINNDFSFEFGYFIDSLTSIMSILITTVGIFVLIYXDNYMSHDQGYLRFFAYMSLFNTSMLGLLTXSNLIQIYXFWELVGMCSYLLIGFWFTXPAAANACQKAFVTNRICDFGLSLXILRXYWITGXFEFQDLFEIFNNLIYNNEVHFLFVTLCASLLFAGAVAKSAQFPLHVWLPDAMEGPTPISALIHAATMVAAGIFLVPRLLPLFIVIPYIMNLISLIGIITVLLGATLALAQKDIKRGLAYSTMSQLGYMMLALGMGSYRAALFHLITHAYSKALLFLGSGSIIHSMEAIVGYSPDKSQNMVFMGGLRKHVPITQIAFLVGTLSLCGIPPLACFWSKDEILSDSWLYSPIFAIIAWSTAGLTASYXFRIYLLTFEGHXNIHFQNYSXKKXSSXYSIKLWGKEEQKMINRNFRLFPLLTMNNNEKPYRIGGNVKKVALITITNFGYKKAFSYPHESDNTMLFPMLILVLFTLFVGAIAIPFNQEGIHFDILSKLLTPSINLLHQNSNDFEDWYQFLTNATFSVSIASFGIFTAFLLYKPFYSSLQNLNLLNSFAKRGPKRIFLDKIIYLIYDWSYNRGYIDTFYSISLTKGIRGLAELTHFFDRRVIDGITNGVXITSFFVGEGIKYVGG.

14 helical membrane passes run 9–29 (WIIPFVPLPIPIKIGMGLLLF), 40–60 (WAFPNILLLSIVMIFSVDLSI), 89–109 (IDSLTSIMSILITTVGIFVLI), 125–145 (FAYMSLFNTSMLGLLTXSNLI), 147–167 (IYXFWELVGMCSYLLIGFWFT), 219–239 (NEVHFLFVTLCASLLFAGAVA), 257–277 (PTPISALIHAATMVAAGIFLV), 280–300 (LLPLFIVIPYIMNLISLIGII), 327–347 (LGYMMLALGMGSYRAALFHLI), 354–374 (ALLFLGSGSIIHSMEAIVGYS), 396–416 (IAFLVGTLSLCGIPPLACFWS), 425–445 (WLYSPIFAIIAWSTAGLTASY), 540–560 (LFPMLILVLFTLFVGAIAIPF), and 594–614 (FLTNATFSVSIASFGIFTAFL).

This sequence belongs to the complex I subunit 5 family. As to quaternary structure, NDH is composed of at least 16 different subunits, 5 of which are encoded in the nucleus.

The protein localises to the plastid. It localises to the chloroplast thylakoid membrane. The catalysed reaction is a plastoquinone + NADH + (n+1) H(+)(in) = a plastoquinol + NAD(+) + n H(+)(out). It carries out the reaction a plastoquinone + NADPH + (n+1) H(+)(in) = a plastoquinol + NADP(+) + n H(+)(out). Its function is as follows. NDH shuttles electrons from NAD(P)H:plastoquinone, via FMN and iron-sulfur (Fe-S) centers, to quinones in the photosynthetic chain and possibly in a chloroplast respiratory chain. The immediate electron acceptor for the enzyme in this species is believed to be plastoquinone. Couples the redox reaction to proton translocation, and thus conserves the redox energy in a proton gradient. The sequence is that of NAD(P)H-quinone oxidoreductase subunit 5, chloroplastic (ndhF) from Pachira aquatica (Guiana chestnut).